The following is a 1998-amino-acid chain: Receptor-type tyrosine-protein phosphatase beta (1998 aa).

Residues M1–A22 form the signal peptide. 17 consecutive Fibronectin type-III domains span residues E23 to T109, P113 to P206, V207 to M291, E292 to L384, P378 to T466, A470 to A556, Q557 to T642, V643 to D733, K734 to E821, P822 to N913, P908 to T994, V995 to A1088, P1086 to V1173, A1176 to S1263, P1264 to D1357, K1358 to P1449, and P1449 to A1551. The Extracellular segment spans residues E23–E1622. 6 N-linked (GlcNAc...) asparagine glycosylation sites follow: N28, N53, N75, N173, N199, and N268. N-linked (GlcNAc...) asparagine glycans are attached at residues N415, N422, N480, N575, N599, and N653. N-linked (GlcNAc...) asparagine glycosylation occurs at N830. N1041, N1097, N1164, N1186, N1213, N1275, N1368, N1471, N1475, and N1519 each carry an N-linked (GlcNAc...) asparagine glycan. The helical transmembrane segment at G1623–C1643 threads the bilayer. At R1644–R1997 the chain is on the cytoplasmic side. Residues L1704–V1964 enclose the Tyrosine-protein phosphatase domain. Residues D1871, C1905–R1911, and Q1949 each bind substrate. C1905 (phosphocysteine intermediate) is an active-site residue. Y1982 carries the post-translational modification Phosphotyrosine.

It belongs to the protein-tyrosine phosphatase family. Receptor class 3 subfamily. Monomer. Interacts with TEK. Interacts via fibronectin type-III 17 domain with CDH5. Detected in a complex with CNTN1 and NRCAM. Interacts (phosphorylated form) with FYN and GRB2. Interacts with IGFBP2. As to expression, expression is very high in the vasculature of lung, spleen, and kidney, as well as in the heart valves, and is also present in the endothelium of arterioles and venules. Also expressed in tumor vasculature.

The protein resides in the membrane. It carries out the reaction O-phospho-L-tyrosyl-[protein] + H2O = L-tyrosyl-[protein] + phosphate. Plays an important role in blood vessel remodeling and angiogenesis. Not necessary for the initial formation of blood vessels, but is essential for their maintenance and remodeling. Can induce dephosphorylation of TEK/TIE2, CDH5/VE-cadherin and KDR/VEGFR-2. Regulates angiopoietin-TIE2 signaling in endothelial cells. Acts as a negative regulator of TIE2, and controls TIE2 driven endothelial cell proliferation, which in turn affects blood vessel remodeling during embryonic development and determines blood vessel size during perinatal growth. Essential for the maintenance of endothelial cell contact integrity and for the adhesive function of VE-cadherin in endothelial cells and this requires the presence of plakoglobin. This chain is Receptor-type tyrosine-protein phosphatase beta (Ptprb), found in Mus musculus (Mouse).